Consider the following 359-residue polypeptide: Small ribosomal subunit protein mS22 (359 aa).

This sequence belongs to the mitochondrion-specific ribosomal protein mS22 family. In terms of assembly, component of the mitochondrial ribosome small subunit (28S) which comprises a 12S rRNA and about 30 distinct proteins.

The protein localises to the mitochondrion. This Bos taurus (Bovine) protein is Small ribosomal subunit protein mS22 (MRPS22).